Here is a 109-residue protein sequence, read N- to C-terminus: Small ribosomal subunit protein uS10c (109 aa).

This sequence belongs to the universal ribosomal protein uS10 family. In terms of assembly, part of the 30S ribosomal subunit.

It localises to the plastid. The protein resides in the chloroplast. Involved in the binding of tRNA to the ribosomes. The sequence is that of Small ribosomal subunit protein uS10c from Cyanidium caldarium (Red alga).